We begin with the raw amino-acid sequence, 272 residues long: 2-succinyl-6-hydroxy-2,4-cyclohexadiene-1-carboxylate synthase (272 aa).

Belongs to the AB hydrolase superfamily. MenH family. As to quaternary structure, monomer.

The enzyme catalyses 5-enolpyruvoyl-6-hydroxy-2-succinyl-cyclohex-3-ene-1-carboxylate = (1R,6R)-6-hydroxy-2-succinyl-cyclohexa-2,4-diene-1-carboxylate + pyruvate. The protein operates within quinol/quinone metabolism; 1,4-dihydroxy-2-naphthoate biosynthesis; 1,4-dihydroxy-2-naphthoate from chorismate: step 3/7. It functions in the pathway quinol/quinone metabolism; menaquinone biosynthesis. Its function is as follows. Catalyzes a proton abstraction reaction that results in 2,5-elimination of pyruvate from 2-succinyl-5-enolpyruvyl-6-hydroxy-3-cyclohexene-1-carboxylate (SEPHCHC) and the formation of 2-succinyl-6-hydroxy-2,4-cyclohexadiene-1-carboxylate (SHCHC). The polypeptide is 2-succinyl-6-hydroxy-2,4-cyclohexadiene-1-carboxylate synthase (Yersinia pseudotuberculosis serotype O:1b (strain IP 31758)).